Consider the following 143-residue polypeptide: Transcriptional regulator MraZ (143 aa).

SpoVT-AbrB domains lie at 5 to 47 and 76 to 119; these read TFTP…PREE and ADEQ…DAQA.

It belongs to the MraZ family. Forms oligomers.

The protein resides in the cytoplasm. The protein localises to the nucleoid. This Corynebacterium urealyticum (strain ATCC 43042 / DSM 7109) protein is Transcriptional regulator MraZ.